A 520-amino-acid polypeptide reads, in one-letter code: Peptide chain release factor 3 (520 aa).

A tr-type G domain is found at 8–277 (ESRKTFAIIS…HAPMPNARQT (270 aa)). GTP is bound by residues 17 to 24 (SHPDAGKT), 85 to 89 (DTPGH), and 139 to 142 (NKLD).

This sequence belongs to the TRAFAC class translation factor GTPase superfamily. Classic translation factor GTPase family. PrfC subfamily.

It is found in the cytoplasm. In terms of biological role, increases the formation of ribosomal termination complexes and stimulates activities of RF-1 and RF-2. It binds guanine nucleotides and has strong preference for UGA stop codons. It may interact directly with the ribosome. The stimulation of RF-1 and RF-2 is significantly reduced by GTP and GDP, but not by GMP. In Staphylococcus haemolyticus (strain JCSC1435), this protein is Peptide chain release factor 3.